Consider the following 158-residue polypeptide: Rhombotin-2 (158 aa).

LIM zinc-binding domains lie at 30–89 (CGGC…RLFG) and 94–153 (CASC…EWTK).

Interacts via its LIM domains with ELF2 and LDB1. Interacts with BEX2 and KDM5A. Also interacts with basic helix-loop-helix protein TAL1/SCL and can assemble in a complex with LMO2 and TAL1/SCL.

The protein resides in the nucleus. Functionally, acts with TAL1/SCL to regulate red blood cell development. Also acts with LDB1 to maintain erythroid precursors in an immature state. The sequence is that of Rhombotin-2 (LMO2) from Bos taurus (Bovine).